A 541-amino-acid chain; its full sequence is Arginine--tRNA ligase (541 aa).

The 'HIGH' region signature appears at 119–129 (ANPTGPLHIGH).

It belongs to the class-I aminoacyl-tRNA synthetase family. In terms of assembly, monomer.

It is found in the cytoplasm. The catalysed reaction is tRNA(Arg) + L-arginine + ATP = L-arginyl-tRNA(Arg) + AMP + diphosphate. The protein is Arginine--tRNA ligase of Helicobacter pylori (strain HPAG1).